Here is a 2542-residue protein sequence, read N- to C-terminus: Highly reducing polyketide synthase (2542 aa).

The region spanning 7 to 435 is the Ketosynthase family 3 (KS3) domain; sequence PEPIAIVGMA…GANAHAILDA (429 aa). Residues Cys-182, His-317, and His-357 each act as for beta-ketoacyl synthase activity in the active site. Residues 545 to 872 form the Malonyl-CoA:ACP transacylase (MAT) domain; the sequence is FVFTGQGAQW…NLVGSLFLSG (328 aa). Positions 927-1062 are N-terminal hotdog fold; that stretch reads HDLLGSRIPG…TTNETLRINS (136 aa). Positions 927–1224 constitute a PKS/mFAS DH domain; it reads HDLLGSRIPG…FLSLETATKE (298 aa). His-959 functions as the Proton acceptor; for dehydratase activity in the catalytic mechanism. A C-terminal hotdog fold region spans residues 1072 to 1224; sequence NKDSYVRRWY…FLSLETATKE (153 aa). The active-site Proton donor; for dehydratase activity is the Asp-1137. The interval 1275–1574 is methyltransferase (CMet) domain; that stretch reads LTQLAIRSVV…AGADIMLDDY (300 aa). Residues 1606–1634 form a disordered region; it reads VNGTNGINSTNSVNVTNDTSGINDTNRMN. One can recognise an Enoyl reductase (ER) domain in the interval 1866–2186; the sequence is GKANSFYFES…QGDSVGSVVL (321 aa). Positions 2209–2389 constitute a Ketoreductase (KR) domain; it reads ASYLLVGCLG…QAMSMALGMI (181 aa).

It depends on pantetheine 4'-phosphate as a cofactor.

It functions in the pathway antifungal biosynthesis. Its function is as follows. Highly reducing polyketide synthase; part of the gene cluster that mediates the biosynthesis of the tetrahydropyranyl antifungal agent lanomycin that acts as an inhibitor of CYP51 and blocks the ergosterol biosynthesis. The biosynthesis probably begins with the formation of an hexaketide, followed by methionine mediated alkylation of C-2 and C-6, and methylation of the reduced C-3 oxygen, pyran forming reductive ring closure, oxygenation of C-4, beta-keto reduction, enoyl reduction and dehydration of the remaining oxygens, and finally, acylation with glycine to complete the biosynthesis. In Pyrenophora dematioidea (Helminthosporium dematioideum), this protein is Highly reducing polyketide synthase.